The chain runs to 310 residues: Olfactory receptor 8B12 (310 aa).

Residues 1 to 24 (MAAKNSSVTEFILEGLTHQPGLRI) lie on the Extracellular side of the membrane. Asn5 carries an N-linked (GlcNAc...) asparagine glycan. A helical transmembrane segment spans residues 25–45 (PLFFLFLGFYTVTVVGNLGLI). Residues 46–53 (TLIGLNSH) are Cytoplasmic-facing. A helical membrane pass occupies residues 54–74 (LHTPMYFFLFNLSLIDFCFST). Residues 75-98 (TITPKMLMSFVSRKNIISFTGCMT) are Extracellular-facing. Cys96 and Cys188 are oxidised to a cystine. Residues 99 to 119 (QLFFFCFFVVSESFILSAMAY) form a helical membrane-spanning segment. Over 120–138 (DRYVAICNPLLYTVTMSCQ) the chain is Cytoplasmic. Residues 139 to 159 (VCLLLLLGAYGMGFAGAMAHT) traverse the membrane as a helical segment. Topologically, residues 160 to 196 (GSIMNLTFCADNLVNHFMCDILPLLELSCNSSYMNEL) are extracellular. N-linked (GlcNAc...) asparagine glycosylation is found at Asn164 and Asn189. A helical transmembrane segment spans residues 197-216 (VVFIVVAVDVGMPIVTVFIS). Topologically, residues 217–236 (YALILSSILHNSSTEGRSKA) are cytoplasmic. A helical membrane pass occupies residues 237-257 (FSTCSSHIIVVSLFFGSGAFM). Topologically, residues 258 to 270 (YLKPLSILPLEQG) are extracellular. A helical membrane pass occupies residues 271–291 (KVSSLFYTIIVPVLNPLIYSL). The Cytoplasmic portion of the chain corresponds to 292-310 (RNKDVKVALRRTLGRKIFS).

Belongs to the G-protein coupled receptor 1 family.

Its subcellular location is the cell membrane. In terms of biological role, odorant receptor. The protein is Olfactory receptor 8B12 (OR8B12) of Homo sapiens (Human).